Reading from the N-terminus, the 243-residue chain is Type III pantothenate kinase (243 aa).

Position 6 to 13 (aspartate 6 to lysine 13) interacts with ATP. Residues tyrosine 86 and glycine 93 to arginine 96 contribute to the substrate site. Aspartate 95 (proton acceptor) is an active-site residue. Position 116 (aspartate 116) interacts with K(+). Residue threonine 119 coordinates ATP. Threonine 171 contributes to the substrate binding site.

It belongs to the type III pantothenate kinase family. Homodimer. The cofactor is NH4(+). It depends on K(+) as a cofactor.

It localises to the cytoplasm. It catalyses the reaction (R)-pantothenate + ATP = (R)-4'-phosphopantothenate + ADP + H(+). The protein operates within cofactor biosynthesis; coenzyme A biosynthesis; CoA from (R)-pantothenate: step 1/5. In terms of biological role, catalyzes the phosphorylation of pantothenate (Pan), the first step in CoA biosynthesis. In Bacteroides fragilis (strain ATCC 25285 / DSM 2151 / CCUG 4856 / JCM 11019 / LMG 10263 / NCTC 9343 / Onslow / VPI 2553 / EN-2), this protein is Type III pantothenate kinase.